The sequence spans 769 residues: DNA mismatch repair protein MLH1 (769 aa).

Residues 1 to 335 (MSLRIKALDA…IANQLHAELS (335 aa)) are DNA- and ATP-binding. Over residues 422-441 (EGSSTKRQLSEPKVTNVSHS) the composition is skewed to polar residues. Residues 422–480 (EGSSTKRQLSEPKVTNVSHSQEAEKLTLNESEQPRDANTINDNDLKDQPKKKQKLGDYK) are disordered. Ser441 bears the Phosphoserine; by ATM or ATR mark. 2 stretches are compositionally biased toward basic and acidic residues: residues 442–456 (QEAE…EQPR) and 464–478 (NDLK…KLGD). The interaction with PMS1 stretch occupies residues 501 to 756 (RVPKERVNVN…RHILKDVVEI (256 aa)).

This sequence belongs to the DNA mismatch repair MutL/HexB family. In terms of assembly, heterodimer of MLH1 and PMS1, called MutLalpha, which is the major MMR MutL activity correcting base-base mismatches as well as IDLs. The heterodimer binds double strand DNA independently of a mismatch with positive cooperativity and has more than one DNA binding site. Forms a ternary complex with either the MSH2-MSH6 (MutSalpha) or the MSH2-MSH3 heterodimer (MutSbeta), which recognize and bind to mismatch DNA. Ternary complex formation is promoted by ATP binding. Heterodimer of MLH1 and MLH3, called MutLbeta, which is involved in correction of a specific subset of IDLs when associated with MutSbeta. Heterodimer of MLH1 and MLH2.

Its subcellular location is the nucleus. Functionally, required for DNA mismatch repair (MMR), correcting base-base mismatches and insertion-deletion loops (IDLs) resulting from DNA replication, DNA damage or from recombination events between non-identical sequences during meiosis. Component of different MutL heterodimers that form a ternary complex with the MutS heterodimers, which initially recognize the DNA mismatches. This complex is thought to be responsible for directing the downstream MMR events, including strand discrimination, excision, and resynthesis. Plays a major role in maintaining the genetic stability of simple sequence repeats, the repair of heteroduplex sites present in meiotic recombination intermediates, and the promotion of meiotic crossing-over. In Saccharomyces cerevisiae (strain ATCC 204508 / S288c) (Baker's yeast), this protein is DNA mismatch repair protein MLH1 (MLH1).